We begin with the raw amino-acid sequence, 195 residues long: Interferon tau-1 (195 aa).

The signal sequence occupies residues 1–23 (MAFVLSLLMALVLVSYGPGGSLG). Cystine bridges form between cysteine 24–cysteine 122 and cysteine 52–cysteine 162.

It belongs to the alpha/beta interferon family. IFN-alphaII subfamily. In terms of tissue distribution, constitutively and exclusively expressed in the mononuclear cells of the extraembryonic trophectoderm.

It is found in the secreted. In terms of biological role, paracrine hormone primarily responsible for maternal recognition of pregnancy. Interacts with endometrial receptors, probably type I interferon receptors, and blocks estrogen receptor expression, preventing the estrogen-induced increase in oxytocin receptor expression in the endometrium. This results in the suppression of the pulsatile endometrial release of the luteolytic hormone prostaglandin F2-alpha, hindering the regression of the corpus luteum (luteolysis) and therefore a return to ovarian cyclicity. This, and a possible direct effect of IFN-tau on prostaglandin synthesis, leads in turn to continued ovarian progesterone secretion, which stimulates the secretion by the endometrium of the nutrients required for the growth of the conceptus. In summary, displays particularly high antiviral and antiproliferative potency concurrently with particular weak cytotoxicity, high antiluteolytic activity and immunomodulatory properties. In contrast with other IFNs, IFN-tau is not virally inducible. The sequence is that of Interferon tau-1 (IFNT1) from Ovis aries (Sheep).